A 389-amino-acid chain; its full sequence is Na(+)/H(+) antiporter NhaA (389 aa).

The next 11 helical transmembrane spans lie at 24–44 (ILLILCTILSLSIANSLAGPA), 56–76 (LSIEHWVNDALMAVFFLFVGL), 94–114 (LLPIFAAIGGIGVPALIHYTL), 122–142 (AGTGIPMATDIAFALGVLALL), 152–172 (VFLTALAVMDDLGAIIVIAMF), 176–196 (QFSLVYLLSALAVFGLLLVLN), 216–236 (FLMLKSGVHATIAGVLLAFAI), 259–279 (PVAFIILPIFALANTGIVIGS), 291–311 (LGIIGGLVFGKPLGIALLSFV), 326–346 (WTHIVGAGILGGIGFTMSIFI), and 363–383 (MAILMASVAAGGLGFLWLSFF).

This sequence belongs to the NhaA Na(+)/H(+) (TC 2.A.33) antiporter family.

It localises to the cell inner membrane. It catalyses the reaction Na(+)(in) + 2 H(+)(out) = Na(+)(out) + 2 H(+)(in). Na(+)/H(+) antiporter that extrudes sodium in exchange for external protons. In Dechloromonas aromatica (strain RCB), this protein is Na(+)/H(+) antiporter NhaA.